A 97-amino-acid chain; its full sequence is MAALFVRSVVASVVDLSRLAVKPRAFSILLGTLPSAKPCAEVRSLLCGGPVLSLQPSLGFKTKGVIKKRCRDCYMVKRRGRWFVLCKTNPKHKQRQM.

This sequence belongs to the bacterial ribosomal protein bL36 family. As to quaternary structure, component of the mitochondrial ribosome large subunit (39S) which comprises a 16S rRNA and about 50 distinct proteins.

It localises to the mitochondrion. The chain is Large ribosomal subunit protein bL36m (Mrpl36) from Rattus norvegicus (Rat).